The following is a 90-amino-acid chain: WAP four-disulfide core domain protein 12 (90 aa).

The signal sequence occupies residues 1–23 (MGSSSFLVLMVSLALVTLVAVEG). A WAP domain is found at 27–74 (GIEKAGVCPADNVRCFKSDPPQCHTDQDCLGERKCCYLHCGFKCVIPV). 4 disulfide bridges follow: cysteine 34-cysteine 62, cysteine 41-cysteine 66, cysteine 49-cysteine 61, and cysteine 55-cysteine 70.

The protein resides in the secreted. In terms of biological role, antibacterial protein. Putative acid-stable proteinase inhibitor. This is WAP four-disulfide core domain protein 12 (WFDC12) from Gorilla gorilla gorilla (Western lowland gorilla).